A 357-amino-acid polypeptide reads, in one-letter code: Actin, cytoplasmic (357 aa).

This sequence belongs to the actin family. Met-1 may be removed after translation.

It is found in the cytoplasm. The protein localises to the cytoskeleton. The enzyme catalyses ATP + H2O = ADP + phosphate + H(+). In terms of biological role, actins are highly conserved proteins that are involved in various types of cell motility and are ubiquitously expressed in all eukaryotic cells. The protein is Actin, cytoplasmic of Oxytricha fallax.